The sequence spans 30 residues: Methanobactin mb-OB3b (30 aa).

Residues M1 to A19 constitute a propeptide that is removed on maturation. Positions L20–C21 form a cross-link, 2-(3-methylbutanoyl)-5-hydroxyoxazole-4-carbothionic acid (Leu-Cys). Residues C21 and C27 each coordinate Cu(2+). A disulfide bridge links C24 with C29. Residues P26 to C27 constitute a cross-link (proline 5-hydroxy-oxazole-4-carbothionic acid (Pro-Cys)).

In terms of assembly, monomer. In the absence of copper, may exist as a dimer or an oligomer.

The protein localises to the secreted. It is found in the cytoplasm. The catalysed reaction is 2 superoxide + 2 H(+) = H2O2 + O2. Its function is as follows. Chalkophore involved in scavenging, uptake and suppression of toxicity of copper. Each apo-methanobactin (apo-mb) complexes 1 Cu(2+) or Cu(1+) ion to form Cu(1+)-mb (Cu-mb) which is then taken up by the cell. Enhances growth rate in the presence of copper and reduces growth lag upon exposition to elevated levels of copper. Cu-mb contributes to the switchover from soluble methane monooxygenase (sMMO) to the membrane-bound particulate MMO (pMMO) by inducing transcription of pMMO subunit A. It also stimulates the enzymatic activity of pMMO. In the absence of copper, binds other metal ions, like Zn(2+), Ag(1+), Au(3+), Co(2+), Cd(2+), Fe(3+), Hg(2+), Mn(2+), Ni(2+), Pb(2+) or U(6+), but not Ba(2+), Ca(2+), La(2+), Mg(2+) or Sr(2+). Uptake is an active process, which may involve TonB-dependent transporters, and as such does not involve porins. Cu-Mb can be taken up by other methanotrophic bacteria but not by E.coli. Has Cu-dependent superoxide dismutase-like activity. Shows reductant-dependent oxidase and hydrogen peroxide reductase activities. Reduces copper-levels in liver in a rat model of Wilson disease. This chain is Methanobactin mb-OB3b, found in Methylosinus trichosporium.